The chain runs to 442 residues: Probable serine/threonine-protein kinase kinase DDB_G0280643 (442 aa).

Residues 74 to 398 (IDPNTIVDCG…VNEILESPYF (325 aa)) enclose the Protein kinase domain. ATP is bound by residues 80–88 (VDCGTNGIM) and K103. D231 serves as the catalytic Proton acceptor.

Belongs to the protein kinase superfamily. CMGC Ser/Thr protein kinase family. MAP kinase subfamily.

The enzyme catalyses L-seryl-[protein] + ATP = O-phospho-L-seryl-[protein] + ADP + H(+). It catalyses the reaction L-threonyl-[protein] + ATP = O-phospho-L-threonyl-[protein] + ADP + H(+). In Dictyostelium discoideum (Social amoeba), this protein is Probable serine/threonine-protein kinase kinase DDB_G0280643.